The sequence spans 143 residues: MPAAKKQIEEKPEVEQDLGAPDFSDLLDDDEKTLIDSVVNDDDESDELTDDAIGMAVGELVGMGVMFLTDYLAERRGEHWNVSTKELKQLAKAVDGSVPDTELSPAWALVAVSVGMFAPRVVVDIQLNKRKVIEVENDDKKAD.

The span at 1–14 (MPAAKKQIEEKPEV) shows a compositional bias: basic and acidic residues. The tract at residues 1–25 (MPAAKKQIEEKPEVEQDLGAPDFSD) is disordered.

This is an uncharacterized protein from Pseudoalteromonas phage PM2 (Bacteriophage PM2).